A 303-amino-acid polypeptide reads, in one-letter code: MASLQDIRRRIDSTKKTSQITSAMQMVSSSKLIQIQKHTSGYLDYANHVEAIVAHLAAAHLLEHQNGSSIPFITQRPVKTTAILVITSDRGLVGGYNNQVLKRTDQIMREQKLTKENAVIFALGGKGSDYYAKRGFTIAFENRDITDVPKFWEVSDLVKEVTKQYAARKFDALELVFNHFINRLKNDVVNQQILPIRSENFQRDEKGNLTADKYKGQSSIYEFEPAPESLLKIVLPQFAQSLLYGAILDAKTAEHAASASAMRAATDNAKDLISTLELKYNRARQAAITTEITEITGGMAALQ.

The protein belongs to the ATPase gamma chain family. As to quaternary structure, F-type ATPases have 2 components, CF(1) - the catalytic core - and CF(0) - the membrane proton channel. CF(1) has five subunits: alpha(3), beta(3), gamma(1), delta(1), epsilon(1). CF(0) has three main subunits: a, b and c.

Its subcellular location is the cell membrane. In terms of biological role, produces ATP from ADP in the presence of a proton gradient across the membrane. The gamma chain is believed to be important in regulating ATPase activity and the flow of protons through the CF(0) complex. The protein is ATP synthase gamma chain of Oenococcus oeni (strain ATCC BAA-331 / PSU-1).